A 1567-amino-acid chain; its full sequence is ABC multidrug transporter MDR1 (1567 aa).

Residues 1 to 11 show a composition bias toward pro residues; it reads MASQPPQPPSG. The segment at 1–37 is disordered; that stretch reads MASQPPQPPSGQPDTQYEEYQSEVITETTNRPTPAAD. The segment covering 22–32 has biased composition (polar residues); sequence SEVITETTNRP. N-linked (GlcNAc...) asparagine glycosylation is found at Asn-149, Asn-157, and Asn-356. An ABC transporter 1 domain is found at 167-432; it reads VQYQDTFLSP…FEEMGWYCPP (266 aa). 6 consecutive transmembrane segments (helical) span residues 543-563, 571-591, 636-656, 661-681, 691-711, and 798-818; these read STIA…SLFF, GFFA…LMSI, IPIK…LGGL, AKFF…SAIF, IPQA…YTGF, and LGIL…VSEL. 3 N-linked (GlcNAc...) asparagine glycosylation sites follow: Asn-819, Asn-895, and Asn-912. An ABC transporter 2 domain is found at 891 to 1134; sequence FTWRNVTYDI…LLNYFETHGA (244 aa). 927-934 is a binding site for ATP; sequence GVSGAGKT. Residues 1172–1202 are disordered; it reads ESRHVQQELDRIQSETSKRNEGHGQSAEKEP. A helical transmembrane segment spans residues 1231–1251; sequence IWGKLLLGLASALFIGFSFFL. A glycan (N-linked (GlcNAc...) asparagine) is linked at Asn-1253. The next 5 helical transmembrane spans lie at 1257 to 1277, 1305 to 1325, 1345 to 1365, 1372 to 1392, and 1498 to 1518; these read AGLQ…SSLV, VFLL…GIIA, ILLL…QMII, ETAG…NGVL, and GIGW…YYLI.

This sequence belongs to the ABC transporter superfamily. ABCG family. PDR (TC 3.A.1.205) subfamily.

Its subcellular location is the cell membrane. The enzyme catalyses voriconazole(in) + ATP + H2O = voriconazole(out) + ADP + phosphate + H(+). It carries out the reaction fluconazole(in) + ATP + H2O = fluconazole(out) + ADP + phosphate + H(+). It catalyses the reaction (R)-miconazole(in) + ATP + H2O = (R)-miconazole(out) + ADP + phosphate + H(+). The catalysed reaction is (S)-miconazole(in) + ATP + H2O = (S)-miconazole(out) + ADP + phosphate + H(+). Its function is as follows. Pleiotropic ABC efflux transporter that may be involved in the modulation susceptibility to a wide range of unrelated cytotoxic compounds, including ethidium bromide, ketoconazole, cycloheximide, fluconazole, griseofulvin, imazalil and itraconazole. This Trichophyton interdigitale (strain MR816) protein is ABC multidrug transporter MDR1.